The following is a 579-amino-acid chain: Glutamine--tRNA ligase (579 aa).

Residues 41–51 (PEPNGYLHIGH) carry the 'HIGH' region motif. ATP is bound by residues 42–44 (EPN) and 48–54 (HIGHAKA). Residues Asp74 and Tyr218 each contribute to the L-glutamine site. ATP is bound by residues Thr237, 285-286 (RL), and 293-295 (MSK). A 'KMSKS' region motif is present at residues 292–296 (VMSKR).

Belongs to the class-I aminoacyl-tRNA synthetase family. Monomer.

The protein resides in the cytoplasm. The catalysed reaction is tRNA(Gln) + L-glutamine + ATP = L-glutaminyl-tRNA(Gln) + AMP + diphosphate. The chain is Glutamine--tRNA ligase from Xanthomonas campestris pv. campestris (strain 8004).